A 100-amino-acid chain; its full sequence is Toxin Rv0299 (100 aa).

Its function is as follows. Toxic component of a type II toxin-antitoxin (TA) system. Upon expression in M.smegmatis inhibits colony formation. Its toxic effect is neutralized by coexpression with cognate antitoxin Rv0298/MT0312. This Mycobacterium tuberculosis (strain ATCC 25618 / H37Rv) protein is Toxin Rv0299.